The following is a 492-amino-acid chain: SH2 domain-containing adapter protein E (492 aa).

4 disordered regions span residues 46–193 (TASE…DKAK), 214–236 (KRTK…EPYD), 260–332 (LDGP…EQPW), and 347–384 (FEGS…KVDP). Phosphoserine is present on S103. A compositionally biased stretch (basic and acidic residues) spans 149-158 (IKVDTQEKNG). Positions 168-184 (TSSSSSSSSSASSSPSS) are enriched in low complexity. Basic and acidic residues-rich tracts occupy residues 214-227 (KRTK…RVGE), 268-285 (ETVK…KDLL), 306-332 (AEVK…EQPW), 349-361 (GSDR…DAGR), and 373-383 (LSDHGDGEKVD). The 96-residue stretch at 393-488 (WYHGSISRAE…AEHMTLLHPV (96 aa)) folds into the SH2 domain.

As to expression, expressed in heart, brain, lung and skeletal muscle.

The sequence is that of SH2 domain-containing adapter protein E (She) from Mus musculus (Mouse).